The sequence spans 253 residues: Serine/threonine-protein phosphatase 3 (253 aa).

It depends on Mn(2+) as a cofactor. Post-translationally, phosphorylated by YegI.

The catalysed reaction is O-phospho-L-seryl-[protein] + H2O = L-seryl-[protein] + phosphate. It carries out the reaction O-phospho-L-threonyl-[protein] + H2O = L-threonyl-[protein] + phosphate. Its activity is regulated as follows. Activity dramatically decreases in the presence of the general protein phosphatase inhibitor sodium phosphate. Slightly inhibited by sodium fluoride. Activity decreases in the presence of the metal chelator EDTA. Its function is as follows. PP2C-like phosphatase that can dephosphorylate YegI. In vitro, can hydrolyze p-nitrophenyl phosphate (pNPP) to p-nitrophenol. The polypeptide is Serine/threonine-protein phosphatase 3 (Escherichia coli (strain K12)).